Consider the following 268-residue polypeptide: MSELYQHRARKRFGQNFLHDAGVIHRILRAIHAREGQRLLEIGPGQGALTEGLLGSGARLDVIELDQDLIPLLKLKFGLESRFSLHQGDALKFDFASLVESGEKLRVVGNLPYNISTPLIFHLLEHAPVIEDMHFMLQKEVVERLAATPGGGDWGRLSIMVQYHCRVEHLFNVGPGAFNPPPKVDSAIVRLTPFAEPPHPARDPKLLERVVREAFNQRRKTLRNTLKPLLSVEDIEAAEVDPTLRPEQLDLAAFVRLANQLAELPGNR.

S-adenosyl-L-methionine contacts are provided by Asn-16, Leu-18, Gly-43, Glu-64, Asp-89, and Asn-110.

This sequence belongs to the class I-like SAM-binding methyltransferase superfamily. rRNA adenine N(6)-methyltransferase family. RsmA subfamily.

Its subcellular location is the cytoplasm. The enzyme catalyses adenosine(1518)/adenosine(1519) in 16S rRNA + 4 S-adenosyl-L-methionine = N(6)-dimethyladenosine(1518)/N(6)-dimethyladenosine(1519) in 16S rRNA + 4 S-adenosyl-L-homocysteine + 4 H(+). Specifically dimethylates two adjacent adenosines (A1518 and A1519) in the loop of a conserved hairpin near the 3'-end of 16S rRNA in the 30S particle. May play a critical role in biogenesis of 30S subunits. In Pseudomonas aeruginosa (strain ATCC 15692 / DSM 22644 / CIP 104116 / JCM 14847 / LMG 12228 / 1C / PRS 101 / PAO1), this protein is Ribosomal RNA small subunit methyltransferase A.